A 489-amino-acid chain; its full sequence is Rhamnulokinase (489 aa).

Residue 13–17 participates in ATP binding; the sequence is ASSGR. A disulfide bridge connects residues Cys68 and Cys222. Substrate-binding positions include Gly83 and 236 to 238; that span reads HDT. Asp237 functions as the Proton acceptor in the catalytic mechanism. Thr259 is a binding site for ATP. A substrate-binding site is contributed by Asn296. ATP is bound at residue Gln304. Cys353 and Cys370 are joined by a disulfide. An ATP-binding site is contributed by Gly402. A disulfide bridge connects residues Cys413 and Cys417.

This sequence belongs to the rhamnulokinase family. Requires Mg(2+) as cofactor.

It catalyses the reaction L-rhamnulose + ATP = L-rhamnulose 1-phosphate + ADP + H(+). Its pathway is carbohydrate degradation; L-rhamnose degradation; glycerone phosphate from L-rhamnose: step 2/3. Its function is as follows. Involved in the catabolism of L-rhamnose (6-deoxy-L-mannose). Catalyzes the transfer of the gamma-phosphate group from ATP to the 1-hydroxyl group of L-rhamnulose to yield L-rhamnulose 1-phosphate. The polypeptide is Rhamnulokinase (Salmonella typhi).